Here is a 278-residue protein sequence, read N- to C-terminus: Putative glycosyltransferase EpsE (278 aa).

It belongs to the glycosyltransferase 2 family.

May be involved in the production of the exopolysaccharide (EPS) component of the extracellular matrix during biofilm formation. EPS is responsible for the adhesion of chains of cells into bundles. Required for biofilm maintenance. The protein is Putative glycosyltransferase EpsE (epsE) of Bacillus subtilis (strain 168).